A 659-amino-acid chain; its full sequence is DNA mismatch repair protein MutL (659 aa).

Residues 338 to 459 form a disordered region; sequence GAPRGASKPG…DTTSERDSLP (122 aa). The span at 352-362 shows a compositional bias: basic and acidic residues; it reads SPEHSPTDRDA. The span at 374 to 391 shows a compositional bias: polar residues; the sequence is SDGNGQRTAASGATSESP.

It belongs to the DNA mismatch repair MutL/HexB family.

Its function is as follows. This protein is involved in the repair of mismatches in DNA. It is required for dam-dependent methyl-directed DNA mismatch repair. May act as a 'molecular matchmaker', a protein that promotes the formation of a stable complex between two or more DNA-binding proteins in an ATP-dependent manner without itself being part of a final effector complex. The chain is DNA mismatch repair protein MutL from Halobacterium salinarum (strain ATCC 29341 / DSM 671 / R1).